We begin with the raw amino-acid sequence, 130 residues long: T-cell receptor beta chain V region A20.2.25 (130 aa).

Positions 1–21 (MSCRLLLYVSLCLVETALMNT) are cleaved as a signal peptide. Residues 22-112 (KITQSPRYLI…DSAVYFCASS (91 aa)) are v segment. Asparagine 36 and asparagine 75 each carry an N-linked (GlcNAc...) asparagine glycan. Positions 113–115 (HGE) are d segment. Residues 116 to 130 (NTEVFFGKGTTLTVV) form a j segment region.

This Mus musculus (Mouse) protein is T-cell receptor beta chain V region A20.2.25.